Consider the following 475-residue polypeptide: Ribulose bisphosphate carboxylase large chain (475 aa).

A propeptide spanning residues 1-2 is cleaved from the precursor; sequence MS. An N-acetylproline modification is found at Pro3. N6,N6,N6-trimethyllysine is present on Lys14. Substrate is bound by residues Asn123 and Thr173. The active-site Proton acceptor is the Lys175. A substrate-binding site is contributed by Lys177. Mg(2+) is bound by residues Lys201, Asp203, and Glu204. Position 201 is an N6-carboxylysine (Lys201). The Proton acceptor role is filled by His294. Substrate-binding residues include Arg295, His327, and Ser379.

This sequence belongs to the RuBisCO large chain family. Type I subfamily. As to quaternary structure, heterohexadecamer of 8 large chains and 8 small chains; disulfide-linked. The disulfide link is formed within the large subunit homodimers. Mg(2+) is required as a cofactor. Post-translationally, the disulfide bond which can form in the large chain dimeric partners within the hexadecamer appears to be associated with oxidative stress and protein turnover.

It localises to the plastid. The protein localises to the chloroplast. The catalysed reaction is 2 (2R)-3-phosphoglycerate + 2 H(+) = D-ribulose 1,5-bisphosphate + CO2 + H2O. The enzyme catalyses D-ribulose 1,5-bisphosphate + O2 = 2-phosphoglycolate + (2R)-3-phosphoglycerate + 2 H(+). RuBisCO catalyzes two reactions: the carboxylation of D-ribulose 1,5-bisphosphate, the primary event in carbon dioxide fixation, as well as the oxidative fragmentation of the pentose substrate in the photorespiration process. Both reactions occur simultaneously and in competition at the same active site. In Fagopyrum esculentum subsp. ancestrale (Wild buckwheat), this protein is Ribulose bisphosphate carboxylase large chain.